The chain runs to 234 residues: tRNA (guanine-N(1)-)-methyltransferase (234 aa).

Residue glycine 113 participates in S-adenosyl-L-methionine binding.

It belongs to the RNA methyltransferase TrmD family. Homodimer.

It localises to the cytoplasm. It catalyses the reaction guanosine(37) in tRNA + S-adenosyl-L-methionine = N(1)-methylguanosine(37) in tRNA + S-adenosyl-L-homocysteine + H(+). In terms of biological role, specifically methylates guanosine-37 in various tRNAs. This Gluconobacter oxydans (strain 621H) (Gluconobacter suboxydans) protein is tRNA (guanine-N(1)-)-methyltransferase.